The following is a 119-amino-acid chain: Aspartate 1-decarboxylase (119 aa).

The active-site Schiff-base intermediate with substrate; via pyruvic acid is Ser-25. The residue at position 25 (Ser-25) is a Pyruvic acid (Ser). Thr-57 contacts substrate. The Proton donor role is filled by Tyr-58. Residue Gly-73 to Ala-75 coordinates substrate.

Belongs to the PanD family. Heterooctamer of four alpha and four beta subunits. The cofactor is pyruvate. Post-translationally, is synthesized initially as an inactive proenzyme, which is activated by self-cleavage at a specific serine bond to produce a beta-subunit with a hydroxyl group at its C-terminus and an alpha-subunit with a pyruvoyl group at its N-terminus.

The protein localises to the cytoplasm. The enzyme catalyses L-aspartate + H(+) = beta-alanine + CO2. It functions in the pathway cofactor biosynthesis; (R)-pantothenate biosynthesis; beta-alanine from L-aspartate: step 1/1. Catalyzes the pyruvoyl-dependent decarboxylation of aspartate to produce beta-alanine. The chain is Aspartate 1-decarboxylase from Ruthia magnifica subsp. Calyptogena magnifica.